A 480-amino-acid polypeptide reads, in one-letter code: Glutamate--tRNA ligase (480 aa).

The short motif at 12-22 (PSPTGAPHLGL) is the 'HIGH' region element. The short motif at 255–259 (KLSKR) is the 'KMSKS' region element. Lysine 258 contacts ATP.

Belongs to the class-I aminoacyl-tRNA synthetase family. Glutamate--tRNA ligase type 1 subfamily. As to quaternary structure, monomer.

It is found in the cytoplasm. It carries out the reaction tRNA(Glu) + L-glutamate + ATP = L-glutamyl-tRNA(Glu) + AMP + diphosphate. Functionally, catalyzes the attachment of glutamate to tRNA(Glu) in a two-step reaction: glutamate is first activated by ATP to form Glu-AMP and then transferred to the acceptor end of tRNA(Glu). The chain is Glutamate--tRNA ligase from Tropheryma whipplei (strain TW08/27) (Whipple's bacillus).